The chain runs to 487 residues: Cytochrome c-552 (487 aa).

The first 27 residues, 1-27 (MSKKWTRNTAAMAAILSALCLSTNALA), serve as a signal peptide directing secretion. A heme c-binding site is contributed by His-104. Cys-132, Cys-135, and Lys-136 together coordinate heme. Heme c contacts are provided by Cys-170, Cys-173, His-174, Cys-219, Cys-222, and His-223. The Ca(2+) site is built by Glu-225, Tyr-226, Lys-271, and Gln-273. Substrate is bound at residue Tyr-226. His-274 contributes to the substrate binding site. His-285, Cys-292, Cys-295, His-296, His-311, Cys-324, Cys-327, His-328, and His-403 together coordinate heme c.

The protein belongs to the cytochrome c-552 family. Ca(2+) is required as a cofactor. Requires heme c as cofactor.

Its subcellular location is the periplasm. It catalyses the reaction 6 Fe(III)-[cytochrome c] + NH4(+) + 2 H2O = 6 Fe(II)-[cytochrome c] + nitrite + 8 H(+). Its pathway is nitrogen metabolism; nitrate reduction (assimilation). In terms of biological role, catalyzes the reduction of nitrite to ammonia, consuming six electrons in the process. The polypeptide is Cytochrome c-552 (Photobacterium profundum (strain SS9)).